Reading from the N-terminus, the 408-residue chain is Menaquinone reductase (408 aa).

Residues 13–17 (GAGPA), 46–49 (CGDG), R103, A127, D290, and 302–303 (GI) each bind FAD.

This sequence belongs to the geranylgeranyl reductase family. The cofactor is FAD.

The enzyme catalyses menaquinone-9 + AH2 = beta-dihydromenaquinone-9 + A. It functions in the pathway quinol/quinone metabolism; menaquinone biosynthesis. In terms of biological role, catalyzes the reduction of a single double bond in the isoprenoid tail of menaquinone (MK-9) in M.tuberculosis, likely the beta-isoprene unit, forming the predominant form of menaquinone found in mycobacteria, MK-9(II-H2). This chain is Menaquinone reductase, found in Mycobacterium tuberculosis (strain CDC 1551 / Oshkosh).